We begin with the raw amino-acid sequence, 669 residues long: Probable pectinesterase/pectinesterase inhibitor 21 (669 aa).

A helical transmembrane segment spans residues 16–36 (IVITISSVLLISMVVAVTVGV). Residues N52, N81, N94, N281, and N300 are each glycosylated (N-linked (GlcNAc...) asparagine). The segment at 52-205 (NASVKAVKDV…IELTHNGLAI (154 aa)) is pectinesterase inhibitor 21. The tract at residues 255–551 (DIVVAQDGSG…FTPAQYIQGD (297 aa)) is pectinesterase 21. Substrate contacts are provided by T330 and Q360. D383 serves as the catalytic Proton donor; for pectinesterase activity. C397 and C417 are disulfide-bonded. D404 acts as the Nucleophile; for pectinesterase activity in catalysis. The N-linked (GlcNAc...) asparagine glycan is linked to N416. Substrate is bound by residues R472 and W474. Residues 615 to 669 (AYTGTASPESSIKVSSSTETASPESSFTEASTASPESSIMVASTESSGSFFSMFT) are disordered. The segment covering 616 to 628 (YTGTASPESSIKV) has biased composition (polar residues). Low complexity predominate over residues 629 to 652 (SSSTETASPESSFTEASTASPESS). Residues 654–669 (MVASTESSGSFFSMFT) show a composition bias toward polar residues.

This sequence in the N-terminal section; belongs to the PMEI family. The protein in the C-terminal section; belongs to the pectinesterase family. Expressed in flower buds.

The protein resides in the membrane. The catalysed reaction is [(1-&gt;4)-alpha-D-galacturonosyl methyl ester](n) + n H2O = [(1-&gt;4)-alpha-D-galacturonosyl](n) + n methanol + n H(+). The protein operates within glycan metabolism; pectin degradation; 2-dehydro-3-deoxy-D-gluconate from pectin: step 1/5. Its function is as follows. Acts in the modification of cell walls via demethylesterification of cell wall pectin. This chain is Probable pectinesterase/pectinesterase inhibitor 21 (PME21), found in Arabidopsis thaliana (Mouse-ear cress).